Consider the following 878-residue polypeptide: Phosphoenolpyruvate carboxylase (878 aa).

Catalysis depends on residues His140 and Lys545.

This sequence belongs to the PEPCase type 1 family. Mg(2+) is required as a cofactor.

It carries out the reaction oxaloacetate + phosphate = phosphoenolpyruvate + hydrogencarbonate. In terms of biological role, forms oxaloacetate, a four-carbon dicarboxylic acid source for the tricarboxylic acid cycle. This is Phosphoenolpyruvate carboxylase from Pseudomonas aeruginosa (strain ATCC 15692 / DSM 22644 / CIP 104116 / JCM 14847 / LMG 12228 / 1C / PRS 101 / PAO1).